Here is a 434-residue protein sequence, read N- to C-terminus: Transcription initiation factor IIE subunit alpha (434 aa).

Residues Val-8–Lys-99 form the HTH TFE/IIEalpha-type domain. Residues Cys-124–Cys-151 form a C4-type zinc finger. Disordered stretches follow at residues Gln-217–Glu-251, Ser-357–Glu-408, and Ile-415–Val-434. Over residues Asp-226–Val-238 the composition is skewed to polar residues. Basic and acidic residues-rich tracts occupy residues Ser-241–Glu-251 and Ile-376–Glu-385. Positions Glu-386 to Ile-399 are enriched in polar residues. Positions Asn-419–Val-434 are enriched in acidic residues.

The protein belongs to the TFIIE alpha subunit family. In terms of assembly, TFIIE is a tetramer of two alpha (tfa1) and two beta (tfa2) subunits.

The protein resides in the nucleus. Its function is as follows. Recruits TFIIH to the initiation complex and stimulates the RNA polymerase II C-terminal domain kinase and DNA-dependent ATPase activities of TFIIH. Both TFIIH and TFIIE are required for promoter clearance by RNA polymerase. The protein is Transcription initiation factor IIE subunit alpha (tfa1) of Schizosaccharomyces pombe (strain 972 / ATCC 24843) (Fission yeast).